Consider the following 740-residue polypeptide: MPSTSLPYTQMAFHMPLKELQPVDTSLPEHIIKGAVVIDKELTTWNRRAVIPSTALHTVFITINRLEQKQADVVKMAAREMNLPEDNTYGLMADAPKRFITNENIDQLGSGFILTLCASPDNYVKRITEILEDGKNIAQMENAVKTLDEFSLDPALIEAFYRCSSLELLFDLVRDDRVSMSYTLLSTCLRALSSILELAVGDVTWKSVPRDVVVSIAALVTGKAKREEVNTLLAALAMIEQLVIGDDTTRDWVLEEVPIETLIRHVEKSDERIALAALSLMNSMIRHCSDKDKRLELIESLEVVPFRNAVHSSLLRDGSARDPKALEQLVEVQRSLISAYDTSPASDSEIQKVLDIDSANENSEEDVEIWRTKLAEHRCGRLATVAMVLFGEKSPQDLRMLISENTMRIEGGKWQLIPMWMRCCDITAELFGLLPGRDELDRLISIIFSTDSPFPAVFSCIVHLFHRTWREMQAKGGEMDKVASFVLEQLRHVLKRKEIHDVEEMSADLETFSYKAMQEVRREEQLEKENDQLHSEAVISLKAKLRPKIEELVRINHLNYLKKGDVFRKPMKSKSLAKAAYWFWKLDASEKMLTITACDGERFVDDGHRDDIRQVWLKDVADVTNNDEIDRKASSSRFASSPSTNMLRGVRVQLKPTNDLKEGEVLMALTPDETQAGIWQESLAYLVGNTEMRSKTNAIVERMLKMELRVRLLNVKLADPENEPDVPPIPDDLISFISSF.

In terms of domain architecture, ELMO spans 348-494; the sequence is SEIQKVLDID…FVLEQLRHVL (147 aa). The segment at 555–690 is required for punctate localization, cell corpse engulfment and distal cell tip migration; that stretch reads INHLNYLKKG…ESLAYLVGNT (136 aa). The SH3-binding signature appears at 724 to 727; the sequence is PDVP.

As to quaternary structure, interacts with psr-1. Forms a ternary complex with ced-2 and ced-5.

It is found in the cytoplasm. Functionally, involved in apoptosis and necrosis. Required for the cell corpse engulfment process. Has roles in the formation of actin halos and distal tip cell migration. Plays no role in amphid axon outgrowth. This Caenorhabditis briggsae protein is Cell death abnormality protein 12.